The following is a 97-amino-acid chain: Glutamyl-tRNA(Gln) amidotransferase subunit C 2 (97 aa).

Belongs to the GatC family. In terms of assembly, heterotrimer of A, B and C subunits.

It catalyses the reaction L-glutamyl-tRNA(Gln) + L-glutamine + ATP + H2O = L-glutaminyl-tRNA(Gln) + L-glutamate + ADP + phosphate + H(+). The enzyme catalyses L-aspartyl-tRNA(Asn) + L-glutamine + ATP + H2O = L-asparaginyl-tRNA(Asn) + L-glutamate + ADP + phosphate + 2 H(+). Functionally, allows the formation of correctly charged Asn-tRNA(Asn) or Gln-tRNA(Gln) through the transamidation of misacylated Asp-tRNA(Asn) or Glu-tRNA(Gln) in organisms which lack either or both of asparaginyl-tRNA or glutaminyl-tRNA synthetases. The reaction takes place in the presence of glutamine and ATP through an activated phospho-Asp-tRNA(Asn) or phospho-Glu-tRNA(Gln). This is Glutamyl-tRNA(Gln) amidotransferase subunit C 2 (gatC2) from Clostridium acetobutylicum (strain ATCC 824 / DSM 792 / JCM 1419 / IAM 19013 / LMG 5710 / NBRC 13948 / NRRL B-527 / VKM B-1787 / 2291 / W).